Consider the following 555-residue polypeptide: Pyrophosphate--fructose 6-phosphate 1-phosphotransferase (555 aa).

Gly-82 lines the diphosphate pocket. Arg-146 lines the substrate pocket. Asp-176 provides a ligand contact to Mg(2+). Substrate contacts are provided by residues 204–206 (TID), 243–244 (KY), 251–253 (MGR), Glu-312, and 428–431 (YEGR). Asp-206 functions as the Proton acceptor in the catalytic mechanism.

This sequence belongs to the phosphofructokinase type A (PFKA) family. PPi-dependent PFK group II subfamily. Clade 'Long' sub-subfamily. As to quaternary structure, homodimer. It depends on Mg(2+) as a cofactor.

The protein resides in the cytoplasm. The catalysed reaction is beta-D-fructose 6-phosphate + diphosphate = beta-D-fructose 1,6-bisphosphate + phosphate + H(+). The protein operates within carbohydrate degradation; glycolysis; D-glyceraldehyde 3-phosphate and glycerone phosphate from D-glucose: step 3/4. Non-allosteric. In terms of biological role, catalyzes the phosphorylation of D-fructose 6-phosphate, the first committing step of glycolysis. Uses inorganic phosphate (PPi) as phosphoryl donor instead of ATP like common ATP-dependent phosphofructokinases (ATP-PFKs), which renders the reaction reversible, and can thus function both in glycolysis and gluconeogenesis. Consistently, PPi-PFK can replace the enzymes of both the forward (ATP-PFK) and reverse (fructose-bisphosphatase (FBPase)) reactions. In Borreliella burgdorferi (strain ATCC 35210 / DSM 4680 / CIP 102532 / B31) (Borrelia burgdorferi), this protein is Pyrophosphate--fructose 6-phosphate 1-phosphotransferase.